The primary structure comprises 377 residues: Palmitoyltransferase PFA4 (377 aa).

Over 1–9 the chain is Cytoplasmic; sequence MAIKLKNRW. Residues 10–30 traverse the membrane as a helical segment; it reads LGVAIPAFLVALIGYGSHYFI. Residues 31 to 122 lie on the Lumenal side of the membrane; the sequence is LSNFLSWNEQ…NCVGHSNFPH (92 aa). Residues 78-128 enclose the DHHC domain; the sequence is NYCKKCRVYKPERAHHCKTCNQCVLAMDHHCPWTLNCVGHSNFPHFMRFLF. Residue cysteine 108 is the S-palmitoyl cysteine intermediate of the active site. Residues 123–143 form a helical membrane-spanning segment; sequence FMRFLFWVIFSTAYLLFLLIG. Over 144 to 163 the chain is Cytoplasmic; sequence RIYLLWSIRHTAFHHRSTSE. Residues 164-184 form a helical membrane-spanning segment; that stretch reads IIFICIMTPMDAFVLLTVSSL. Topologically, residues 185–377 are lumenal; that stretch reads LGRCIYNQCL…SDFGVDTELE (193 aa).

The protein belongs to the DHHC palmitoyltransferase family. PFA4 subfamily.

Its subcellular location is the endoplasmic reticulum membrane. The enzyme catalyses L-cysteinyl-[protein] + hexadecanoyl-CoA = S-hexadecanoyl-L-cysteinyl-[protein] + CoA. Its function is as follows. Mediates the reversible addition of palmitate to target proteins, thereby regulating their membrane association and biological function. The polypeptide is Palmitoyltransferase PFA4 (Kluyveromyces lactis (strain ATCC 8585 / CBS 2359 / DSM 70799 / NBRC 1267 / NRRL Y-1140 / WM37) (Yeast)).